The primary structure comprises 186 residues: Calcium load-activated calcium channel homolog (186 aa).

The Cytoplasmic portion of the chain corresponds to 1-6 (MLGDCL). Residues 7–27 (LIIAIAFGTALAGEGITWLLV) form a helical membrane-spanning segment. Topologically, residues 28–87 (YRSDHYKRLKADMDKKTKKLEKKKQEVGDTNDKNIKRKLEREEERLKATNRDMSMFKMKS) are lumenal. Residues 30-86 (SDHYKRLKADMDKKTKKLEKKKQEVGDTNDKNIKRKLEREEERLKATNRDMSMFKMK) adopt a coiled-coil conformation. Residues 88–108 (MFAIGLAFTALLSTFNSIFEG) form a helical membrane-spanning segment. At 109 to 134 (RVVAKLPFYPIGFIQGLSHRNLIGED) the chain is on the cytoplasmic side. An intramembrane region (pore-forming) is located at residues 135–151 (MTDCSFIFLYILCTMTV). The Cytoplasmic portion of the chain corresponds to 152–186 (RQNLQKILGFAPSRAMARQQSSPWAPPNSQMNYLR).

This sequence belongs to the TMCO1 family. In terms of assembly, homodimer and homotetramer.

Its subcellular location is the endoplasmic reticulum membrane. Functionally, calcium-selective channel required to prevent calcium stores from overfilling. The protein is Calcium load-activated calcium channel homolog of Caenorhabditis elegans.